The primary structure comprises 149 residues: UPF0178 protein CPR_2251 (149 aa).

The protein belongs to the UPF0178 family.

This chain is UPF0178 protein CPR_2251, found in Clostridium perfringens (strain SM101 / Type A).